Reading from the N-terminus, the 33-residue chain is MPVNGIFDVFDMLSIYIIYKLIVSNNTWLIMRK.

A helical transmembrane segment spans residues 10–29 (FDMLSIYIIYKLIVSNNTWL).

The protein resides in the cell inner membrane. This is Protein YtiC from Escherichia coli (strain K12).